We begin with the raw amino-acid sequence, 1001 residues long: Chloride channel protein clh-3 (1001 aa).

Topologically, residues 1 to 48 (MGIGTKILSKIEKNKTSDGLTIPLTPTTQKQSSSWCSFESIKTFFRTV) are cytoplasmic. Transmembrane regions (helical) follow at residues 49–85 (IRDWIFLALLGFIMASLSFGMDYAILNLQNGQMRLFD) and 91–117 (HFTLAYLVWVGYVVGLILLSAVCAHYI). Positions 123 to 127 (GSGIP) match the Selectivity filter part_1 motif. Ser-124 contacts chloride. Residues 126-133 (IPEMKTIL) constitute an intramembrane region (helical). The next 2 helical transmembrane spans lie at 142 to 160 (LSVRTLLSKMIGLTLSLGS) and 167 to 185 (EGPFVHVASVVASQLTRLV). A Selectivity filter part_2 motif is present at residues 165–169 (GKEGP). Intramembrane regions (helical) lie at residues 202 to 214 (MLAAGCAVGVACT) and 218 to 226 (PIGGVLFSI). Transmembrane regions (helical) follow at residues 238 to 258 (YWRGFFAATCSATLFRILRMF), 285 to 313 (LPIFALIGLVCGLAGSIFVYLHRRTVLFL), 322 to 341 (IFQKYWLIYPIFIATFISSL), 405 to 425 (YSPFVTLSSFQVVYFFLAILA), and 433 to 456 (GIFMPVFVLGAAFGRLVGEGVFSL). The Selectivity filter part_3 signature appears at 433-437 (GIFMP). Ile-434 and Phe-435 together coordinate chloride. An intramembrane region (helical) is located at residues 473 to 487 (GVYAVVGAAAFCGAV). Residues 488–489 (TH) constitute an intramembrane region (note=Loop between two helices). An intramembrane region (helical) is located at residues 490-501 (TVSVAVIVFELT). The note=Loop between two helices intramembrane region spans 502-506 (GQLCH). A helical membrane pass occupies residues 507–524 (LLPVMIAVLIANAVASYL). Over 525–1001 (QPSIYDSIIR…LPDDVHDEKF (477 aa)) the chain is Cytoplasmic. Tyr-529 provides a ligand contact to chloride. A CBS 1 domain is found at 560–619 (MISPLVYIAKDSTVGDIKRALETKTRIRAFPLVENMESLALVGSVSRSQLQRYVDSQIGT). Residues 625-657 (EATRRIKQRLEDEESERKRREESKSDDTEDSLE) are a coiled coil. The span at 634–650 (LEDEESERKRREESKSD) shows a compositional bias: basic and acidic residues. Residues 634-662 (LEDEESERKRREESKSDDTEDSLETTGAG) form a disordered region. Phosphoserine; by gck-3 occurs at positions 742 and 747. The CBS 2 domain maps to 788–845 (IDSTPFQLSEYTSLFKAHSLFSLLGLNRAYVTKKGQLIGVVALKELRLAIEYLQSGKV).

This sequence belongs to the chloride channel (TC 2.A.49) family. As to quaternary structure, isoform a interacts (via RFLI motif) with gck-3 (via C-terminus). Post-translationally, phosphorylated by gck-3; phosphorylation at both Ser-742 and Ser-747 is required to inhibit channel activity. Dephosphorylated by gsp-1/2 during cell swelling and oocyte meiotic maturation, which results in channel activation. In terms of tissue distribution, expressed in excretory cell, 4 anterior epithelial cells of the intestine, hermaphrodite-specific neurons and enteric muscles. Expressed also in vulva and uterus. Isoform a is expressed in oocytes (at protein level).

Its subcellular location is the cell membrane. Voltage-gated chloride channel. Insensitive to depolarizing conditioning voltages, requires low voltages for activation, insensitive to chloride levels and has a mild sensitivity to low pH. Channel gating properties are conferred by the cytoplasmic C-terminus. Plays a role in egg laying by modulating hermaphrodite-specific neurons (HSN) excitability and the ovulatory contractions of gap-junction-coupled gonadal sheath cells. When active, may prevent tubular formation of the excretory canals. Activated during oocyte meiotic maturation and by membrane hyperpolarization and cell swelling. Inhibited by Zn(2+) and to a lesser extent by Cd(2+). Its function is as follows. Voltage-gated chloride channel. Sensitive to depolarizing conditioning voltages, requires stronger voltages for activation and activation is slower, is inhibited by low concentrations of chloride and is activated by low pH. Channel gating properties are conferred by the cytoplasmic C-terminus. The polypeptide is Chloride channel protein clh-3 (Caenorhabditis elegans).